A 505-amino-acid chain; its full sequence is Monocarboxylate transporter 6 (505 aa).

Over 1 to 17 (MPQALERADGSWAWVVL) the chain is Cytoplasmic. The chain crosses the membrane as a helical span at residues 18–38 (LATMVTQGLTLGFPTCIGIFF). Topologically, residues 39 to 53 (TELQWEFQASNSETS) are extracellular. The helical transmembrane segment at 54-74 (WFPSILTAVLHMAGPLCSILV) threads the bilayer. The Cytoplasmic segment spans residues 75–80 (GRFGCR). Residues 81–101 (VTVMLGGVLASLGMVASSFSH) form a helical membrane-spanning segment. The Extracellular portion of the chain corresponds to 102–110 (NLSQLYFTA). A helical membrane pass occupies residues 111–131 (GFITGLGMCFSFQSSITVLGF). Residues 132–137 (YFVRRR) lie on the Cytoplasmic side of the membrane. A helical membrane pass occupies residues 138–158 (VLANALASMGVSLGITLWPLL). Topologically, residues 159 to 171 (SRYLLENLGWRGT) are extracellular. Residues 172–192 (FLVFGGIFLHCCICGAIIRPV) form a helical membrane-spanning segment. Residues 193-239 (ATSVAPETKECPPPPPETPALGCLAACGRTIQRHLAFDILRHNTGYC) lie on the Cytoplasmic side of the membrane. A helical membrane pass occupies residues 240-260 (VYILGVMWSVLGFPLPQVFLV). The Extracellular segment spans residues 261-274 (PYAMWHSVDEQQAA). The helical transmembrane segment at 275–295 (LLISIIGFSNIFLRPLAGLMA) threads the bilayer. The Cytoplasmic segment spans residues 296-305 (GRPAFASHRK). The chain crosses the membrane as a helical span at residues 306 to 326 (YLFSLALLLNGLTNLVCAASG). Over 327–329 (DFW) the chain is Extracellular. A helical transmembrane segment spans residues 330–350 (VLVGYCLAYSVSMSGIGALIF). The Cytoplasmic segment spans residues 351–367 (QVLMDIVPMDQFPRALG). The chain crosses the membrane as a helical span at residues 368 to 388 (LFTVLDGLAFLISPPLAGLLL). Over 389–396 (DATNNFSY) the chain is Extracellular. Residues 397-417 (VFYMSSFFLISAALFMGGSFY) traverse the membrane as a helical segment. Residues 418–505 (ALQKKEQGKQ…QTALGWNSPT (88 aa)) are Cytoplasmic-facing. Residues 443 to 464 (KDGPGKQRSPEIMCQSSRQPRP) form a disordered region.

This sequence belongs to the major facilitator superfamily. Monocarboxylate porter (TC 2.A.1.13) family. As to expression, highly expressed in kidney.

The protein resides in the cell membrane. Functionally, proton-linked monocarboxylate transporter. Catalyzes the rapid transport across the plasma membrane of many monocarboxylates such as lactate, pyruvate, branched-chain oxo acids derived from leucine, valine and isoleucine, and the ketone bodies acetoacetate, beta-hydroxybutyrate and acetate. The protein is Monocarboxylate transporter 6 (SLC16A5) of Homo sapiens (Human).